We begin with the raw amino-acid sequence, 404 residues long: Cysteine desulfurase IscS (404 aa).

Pyridoxal 5'-phosphate is bound by residues 75–76 (AT), N155, Q183, and 203–205 (SAH). Residue K206 is modified to N6-(pyridoxal phosphate)lysine. T243 serves as a coordination point for pyridoxal 5'-phosphate. C328 functions as the Cysteine persulfide intermediate in the catalytic mechanism. Position 328 (C328) interacts with [2Fe-2S] cluster.

This sequence belongs to the class-V pyridoxal-phosphate-dependent aminotransferase family. NifS/IscS subfamily. In terms of assembly, homodimer. Forms a heterotetramer with IscU, interacts with other sulfur acceptors. Pyridoxal 5'-phosphate is required as a cofactor.

The protein resides in the cytoplasm. The enzyme catalyses (sulfur carrier)-H + L-cysteine = (sulfur carrier)-SH + L-alanine. The protein operates within cofactor biosynthesis; iron-sulfur cluster biosynthesis. Its function is as follows. Master enzyme that delivers sulfur to a number of partners involved in Fe-S cluster assembly, tRNA modification or cofactor biosynthesis. Catalyzes the removal of elemental sulfur atoms from cysteine to produce alanine. Functions as a sulfur delivery protein for Fe-S cluster synthesis onto IscU, an Fe-S scaffold assembly protein, as well as other S acceptor proteins. This is Cysteine desulfurase IscS from Vibrio cholerae serotype O1 (strain ATCC 39541 / Classical Ogawa 395 / O395).